The following is a 490-amino-acid chain: Mitochondrial-processing peptidase subunit beta (490 aa).

A mitochondrion-targeting transit peptide spans 1–46; that stretch reads MAAAAVARAVLFSAARRRLCGFTERLLIGGAAGRSLYFGGNRLRST. Position 102 (histidine 102) interacts with Zn(2+). Glutamate 105 functions as the Proton acceptor in the catalytic mechanism. Zn(2+) is bound by residues histidine 106 and glutamate 182.

This sequence belongs to the peptidase M16 family. Heterodimer of PMPCA (alpha) and PMPCB (beta) subunits, forming the mitochondrial processing protease (MPP) in which PMPCA is involved in substrate recognition and binding and PMPCB is the catalytic subunit. Zn(2+) serves as cofactor.

Its subcellular location is the mitochondrion matrix. The catalysed reaction is Release of N-terminal transit peptides from precursor proteins imported into the mitochondrion, typically with Arg in position P2.. Binding to PMPCA is required for catalytic activity. In terms of biological role, catalytic subunit of the essential mitochondrial processing protease (MPP), which cleaves the mitochondrial sequence off newly imported precursors proteins. Preferentially, cleaves after an arginine at position P2. Required for PINK1 turnover by coupling PINK1 mitochondrial import and cleavage, which results in subsequent PINK1 proteolysis. In Bos taurus (Bovine), this protein is Mitochondrial-processing peptidase subunit beta (PMPCB).